The chain runs to 478 residues: Argininosuccinate synthase (478 aa).

Residues 17-25 and Ala43 each bind ATP; that span reads AFSGGLDTS. Tyr99 serves as a coordination point for L-citrulline. Positions 129 and 131 each coordinate ATP. L-aspartate contacts are provided by Thr131, Asn135, and Asp136. L-citrulline is bound at residue Asn135. Asp136 contacts ATP. Positions 139 and 192 each coordinate L-citrulline. Residue Asp194 coordinates ATP. L-citrulline-binding residues include Thr201, Glu203, and Glu280.

It belongs to the argininosuccinate synthase family. Type 2 subfamily. In terms of assembly, homotetramer.

The protein resides in the cytoplasm. It catalyses the reaction L-citrulline + L-aspartate + ATP = 2-(N(omega)-L-arginino)succinate + AMP + diphosphate + H(+). It functions in the pathway amino-acid biosynthesis; L-arginine biosynthesis; L-arginine from L-ornithine and carbamoyl phosphate: step 2/3. The protein is Argininosuccinate synthase of Leifsonia xyli subsp. xyli (strain CTCB07).